A 601-amino-acid chain; its full sequence is MTKVPVSHIRNFSIIAHIDHGKSTLADRLLQATGTVADREMKEQFLDTMDLERERGITIKLQAARMNYHAKDGEEYVLNLIDTPGHVDFSYEVSRSLAACEGALLVVDASQGVEAQTLANVYLALEHDLEIIPVLNKIDLPGAEPERVKEEIEEIIGLDCSGAILASAKEGIGIPEILESIVQLVPPPQDTIGEKLRALIFDSYYDSYRGVIVYFRVMDGTIAKGDRVRLMASKKEYEIDDLGVLSPTQQPVQELHAGEVGYFSAAIKAVEDARVGDTITLAKKQAQDPLPGYRSANPMVFCGLFPTDADQFPDLREALDKLKLNDAALSYEAETSSAMGFGFRCGFLGLLHMEIVQERLEREYGLDLIVTSPSVVYQVTTSKEEVILVDNPNFLPEPNLREKIEEPYVRVEMITPEEYVGTLMELGQSRRGVFKDMKYLAQGRTTLVYEIPLAEVVTDFFDQMKSRSRGYASMEYHLIGYRENPLVKLDIMINAEPVDALAIIVHRDKAYGVGRALAEKLKELIPRHQFKVPIQASIGSKVIASEHIPALRKDVLAKCYGGDISRKKKLLQKQAKGKKRMKSLGTVDVPQEAFMAVLRLD.

One can recognise a tr-type G domain in the interval 7 to 189 (SHIRNFSIIA…SIVQLVPPPQ (183 aa)). GTP is bound by residues 19–24 (DHGKST) and 136–139 (NKID).

The protein belongs to the TRAFAC class translation factor GTPase superfamily. Classic translation factor GTPase family. LepA subfamily.

The protein localises to the cell inner membrane. The enzyme catalyses GTP + H2O = GDP + phosphate + H(+). Functionally, required for accurate and efficient protein synthesis under certain stress conditions. May act as a fidelity factor of the translation reaction, by catalyzing a one-codon backward translocation of tRNAs on improperly translocated ribosomes. Back-translocation proceeds from a post-translocation (POST) complex to a pre-translocation (PRE) complex, thus giving elongation factor G a second chance to translocate the tRNAs correctly. Binds to ribosomes in a GTP-dependent manner. The polypeptide is Elongation factor 4 (Trichodesmium erythraeum (strain IMS101)).